Consider the following 595-residue polypeptide: DNA primase (595 aa).

Residues 38-62 (CPFHQEKTPSFTVSNSKRFFYCFGC) form a CHC2-type zinc finger. A Toprim domain is found at 250-332 (NHSILVEGYF…EKKISFIRLP (83 aa)). Mg(2+)-binding residues include Glu256, Asp300, and Asp302.

This sequence belongs to the DnaG primase family. As to quaternary structure, monomer. Interacts with DnaB. Requires Zn(2+) as cofactor. Mg(2+) is required as a cofactor.

It carries out the reaction ssDNA + n NTP = ssDNA/pppN(pN)n-1 hybrid + (n-1) diphosphate.. RNA polymerase that catalyzes the synthesis of short RNA molecules used as primers for DNA polymerase during DNA replication. The sequence is that of DNA primase from Rickettsia conorii (strain ATCC VR-613 / Malish 7).